Here is a 1265-residue protein sequence, read N- to C-terminus: Guanine nucleotide exchange factor SDC25 (1265 aa).

One can recognise an SH3 domain in the interval 26–97 (QPIDVVECTY…PPSFTRSILN (72 aa)). 2 disordered regions span residues 409-454 (IPAS…DTIW) and 623-648 (LNLD…DEYE). Residues 416-428 (TSCSSETSHHSPS) show a composition bias toward low complexity. The N-terminal Ras-GEF domain occupies 782–914 (SNNRIKGGSK…LLKEVNQKFK (133 aa)). The Ras-GEF domain maps to 952–1199 (DPVLFATQLT…YQLSLIIEPK (248 aa)). Positions 1201 to 1252 (RKKVVPNSNSNNKSQEKSRDDQTDEGKTSTKKDRFSKFQLHKTKKKAPKVSK) are disordered. The segment covering 1214 to 1236 (SQEKSRDDQTDEGKTSTKKDRFS) has biased composition (basic and acidic residues). Positions 1239–1252 (QLHKTKKKAPKVSK) are enriched in basic residues.

Promotes the exchange of Ras-bound GDP by GTP. The sequence is that of Guanine nucleotide exchange factor SDC25 (SDC25) from Saccharomyces cerevisiae (strain AWRI1631) (Baker's yeast).